A 355-amino-acid chain; its full sequence is Putative [LysW]-L-2-aminoadipate/[LysW]-L-glutamate phosphate reductase (355 aa).

13-16 (SGMT) contributes to the NADP(+) binding site. C153 is an active-site residue. N323 serves as a coordination point for NADP(+).

This sequence belongs to the NAGSA dehydrogenase family. Type 1 subfamily. LysY sub-subfamily.

It is found in the cytoplasm. The catalysed reaction is [amino-group carrier protein]-C-terminal-N-(1-carboxy-5-oxopentan-1-yl)-L-glutamine + phosphate + NADP(+) = [amino-group carrier protein]-C-terminal-N-(1-carboxy-5-phosphooxy-5-oxopentan-1-yl)-L-glutamine + NADPH + H(+). It carries out the reaction [amino-group carrier protein]-C-terminal-gamma-(L-glutamyl-5-semialdehyde)-L-glutamate + phosphate + NADP(+) = [amino-group carrier protein]-C-terminal-gamma-(5-phospho-L-glutamyl)-L-glutamate + NADPH + H(+). Its pathway is amino-acid biosynthesis; L-lysine biosynthesis via AAA pathway; L-lysine from L-alpha-aminoadipate (Thermus route): step 3/5. It functions in the pathway amino-acid biosynthesis; L-arginine biosynthesis. Its function is as follows. Involved in both the arginine and lysine biosynthetic pathways. The polypeptide is Putative [LysW]-L-2-aminoadipate/[LysW]-L-glutamate phosphate reductase (Aeropyrum pernix (strain ATCC 700893 / DSM 11879 / JCM 9820 / NBRC 100138 / K1)).